Consider the following 366-residue polypeptide: MREETPEQPAPLRSGYTTGSCATATSLAAARLLLGGTISDAVQIVLPKGQQVLMRLEFCRAWENGAEAGTLKDAGDDPDVTHGALVFARVRLGAEPGVRFHAGPGVGTVTRPGLTLAVGEPAINPVPRQMIERHLAQLAAERGYAGGFEVAIGVEGGAELALKTMNPRLGILGGLSILGTSGIVRPFSCSAYIASIHQGIDVARANGVRHIAACTGNASEDAMRRRYGLPEIALIEMGDFAGAVLKHLRKAPVEKLSLCGGFGKISKLAGGHLDLHSRHSSIDLPQLAGWAAALGASTALQDSMRAANTSQQALAQAHAEGVALGDAVCAHALRFARGIVPTEVALEVFAIDRQGNLVGQACEERR.

It belongs to the CbiD family.

The enzyme catalyses Co-precorrin-5B + S-adenosyl-L-methionine = Co-precorrin-6A + S-adenosyl-L-homocysteine. It functions in the pathway cofactor biosynthesis; adenosylcobalamin biosynthesis; cob(II)yrinate a,c-diamide from sirohydrochlorin (anaerobic route): step 6/10. In terms of biological role, catalyzes the methylation of C-1 in cobalt-precorrin-5B to form cobalt-precorrin-6A. This is Cobalt-precorrin-5B C(1)-methyltransferase from Pseudomonas aeruginosa (strain UCBPP-PA14).